We begin with the raw amino-acid sequence, 425 residues long: MAFLALGINHKTASVDVRERVAFTPEQLVEALQQLCQLTQSREAAILSTCNRSELYIEHEHLGADSILAWLANYHHLSLEELRASAYVHEDDAAVRHMMRVASGLDSLVLGEPQILGQMKSAYAVAREAGTVGPLLGRLFQATFSAAKQVRTDTAIGENPVSVAFAAVSLAKQIFSDLQRSQALLIGAGETITLVARHLHDLGVKRIVVANRTLERASMLAAEFGAHAVLLSDIPAELVNSDIVISSTASQLPILGKGAVESALKLRKHKPIFMVDIAVPRDIEPEVGELDDVYLYSVDDLHEVVAENLKSRQGAALAAEQLVSVGAEDFMSRLRELAAVDVLRAYRQQSERLRDEELSKAQRMLANGSNAEDVLIQLARGLTNKLLHAPSVQLKKLSAEGRVDALAMAQELFALGEGSTDKPPQ.

Residues 49 to 52, S107, 112 to 114, and Q118 each bind substrate; these read TCNR and EPQ. Catalysis depends on C50, which acts as the Nucleophile. Residue 187–192 coordinates NADP(+); sequence GAGETI.

It belongs to the glutamyl-tRNA reductase family. In terms of assembly, homodimer.

It carries out the reaction (S)-4-amino-5-oxopentanoate + tRNA(Glu) + NADP(+) = L-glutamyl-tRNA(Glu) + NADPH + H(+). It functions in the pathway porphyrin-containing compound metabolism; protoporphyrin-IX biosynthesis; 5-aminolevulinate from L-glutamyl-tRNA(Glu): step 1/2. In terms of biological role, catalyzes the NADPH-dependent reduction of glutamyl-tRNA(Glu) to glutamate 1-semialdehyde (GSA). This Pseudomonas syringae pv. syringae (strain B728a) protein is Glutamyl-tRNA reductase.